Reading from the N-terminus, the 169-residue chain is Putative tRNA (cytidine(34)-2'-O)-methyltransferase (169 aa).

4 residues coordinate S-adenosyl-L-methionine: V79, G104, I125, and S134.

This sequence belongs to the class IV-like SAM-binding methyltransferase superfamily. RNA methyltransferase TrmH family. TrmL subfamily.

It localises to the cytoplasm. It carries out the reaction cytidine(34) in tRNA + S-adenosyl-L-methionine = 2'-O-methylcytidine(34) in tRNA + S-adenosyl-L-homocysteine + H(+). The catalysed reaction is 5-carboxymethylaminomethyluridine(34) in tRNA(Leu) + S-adenosyl-L-methionine = 5-carboxymethylaminomethyl-2'-O-methyluridine(34) in tRNA(Leu) + S-adenosyl-L-homocysteine + H(+). Its function is as follows. Could methylate the ribose at the nucleotide 34 wobble position in tRNA. In Lactococcus lactis subsp. cremoris (strain MG1363), this protein is Putative tRNA (cytidine(34)-2'-O)-methyltransferase.